Here is a 295-residue protein sequence, read N- to C-terminus: 4-hydroxy-tetrahydrodipicolinate synthase (295 aa).

Threonine 46 is a binding site for pyruvate. The Proton donor/acceptor role is filled by tyrosine 135. Lysine 164 acts as the Schiff-base intermediate with substrate in catalysis. A pyruvate-binding site is contributed by isoleucine 205.

It belongs to the DapA family. Homotetramer; dimer of dimers.

The protein localises to the cytoplasm. The enzyme catalyses L-aspartate 4-semialdehyde + pyruvate = (2S,4S)-4-hydroxy-2,3,4,5-tetrahydrodipicolinate + H2O + H(+). Its pathway is amino-acid biosynthesis; L-lysine biosynthesis via DAP pathway; (S)-tetrahydrodipicolinate from L-aspartate: step 3/4. In terms of biological role, catalyzes the condensation of (S)-aspartate-beta-semialdehyde [(S)-ASA] and pyruvate to 4-hydroxy-tetrahydrodipicolinate (HTPA). This chain is 4-hydroxy-tetrahydrodipicolinate synthase, found in Aliarcobacter butzleri (strain RM4018) (Arcobacter butzleri).